Reading from the N-terminus, the 431-residue chain is Histidinol dehydrogenase 1 (431 aa).

Residues Y127, Q188, and N211 each coordinate NAD(+). 3 residues coordinate substrate: S234, Q256, and H259. Residues Q256 and H259 each contribute to the Zn(2+) site. Residues E324 and H325 each act as proton acceptor in the active site. H325, D358, E412, and H417 together coordinate substrate. D358 lines the Zn(2+) pocket. Residue H417 coordinates Zn(2+).

This sequence belongs to the histidinol dehydrogenase family. It depends on Zn(2+) as a cofactor.

It carries out the reaction L-histidinol + 2 NAD(+) + H2O = L-histidine + 2 NADH + 3 H(+). It participates in amino-acid biosynthesis; L-histidine biosynthesis; L-histidine from 5-phospho-alpha-D-ribose 1-diphosphate: step 9/9. Catalyzes the sequential NAD-dependent oxidations of L-histidinol to L-histidinaldehyde and then to L-histidine. In Trichormus variabilis (strain ATCC 29413 / PCC 7937) (Anabaena variabilis), this protein is Histidinol dehydrogenase 1.